The chain runs to 403 residues: Forkhead box protein Q1 (403 aa).

Disordered regions lie at residues 1 to 75 and 94 to 116; these read MKLE…PGAE and GAAGPGAGGAGSGEGARSKPYTR. A compositionally biased stretch (low complexity) spans 32-48; the sequence is LSAAGDDSLGSDGDCAA. The segment covering 96–107 has biased composition (gly residues); it reads AGPGAGGAGSGE. Residues 119-214 constitute a DNA-binding region (fork-head); the sequence is KPPYSYIALI…ADGVFRRRRK (96 aa). The tract at residues 216 to 266 is disordered; sequence LSHRAPVPAPGLRPEEAPGLPAAPPPAPAAPASPRMRSPARQEERASPAGK. The segment covering 236–246 has biased composition (pro residues); it reads PAAPPPAPAAP.

Expressed predominantly in the stomach, trachea, bladder and salivary gland.

The protein resides in the nucleus. Plays a role in hair follicle differentiation. The polypeptide is Forkhead box protein Q1 (FOXQ1) (Homo sapiens (Human)).